Here is a 246-residue protein sequence, read N- to C-terminus: Protein PHLOEM PROTEIN 2-LIKE A1 (246 aa).

Vascular tissues, specifically in phloem companion cell-sieve element complexes.

This chain is Protein PHLOEM PROTEIN 2-LIKE A1 (PP2A1), found in Arabidopsis thaliana (Mouse-ear cress).